The primary structure comprises 970 residues: UvrABC system protein A (970 aa).

ATP is bound at residue 34 to 41; it reads GVSGSGKS. The C4-type zinc finger occupies 284 to 311; sequence CPEHGAVMDELSPRLFSFNSPYGACPDC. ABC transporter domains are found at residues 340-617 and 637-965; these read WSEK…QRSL and GNGA…KYLA. Residue 669-676 coordinates ATP; it reads GVSGSGKS. Residues 768–794 form a C4-type zinc finger; the sequence is CEACAGQGVNVIEMNFLPDVYVQCDVC.

This sequence belongs to the ABC transporter superfamily. UvrA family. As to quaternary structure, forms a heterotetramer with UvrB during the search for lesions.

It is found in the cytoplasm. The UvrABC repair system catalyzes the recognition and processing of DNA lesions. UvrA is an ATPase and a DNA-binding protein. A damage recognition complex composed of 2 UvrA and 2 UvrB subunits scans DNA for abnormalities. When the presence of a lesion has been verified by UvrB, the UvrA molecules dissociate. The protein is UvrABC system protein A of Synechocystis sp. (strain ATCC 27184 / PCC 6803 / Kazusa).